The following is a 382-amino-acid chain: Na(+)/H(+) antiporter NhaA 2 (382 aa).

The next 11 helical transmembrane spans lie at 7 to 27 (MVLS…LALL), 58 to 78 (LDLW…GLEL), 94 to 114 (SLPI…FAAI), 124 to 144 (GWAI…MLLG), 153 to 173 (LFLL…IALF), 178 to 198 (LSAL…LLNY), 199 to 219 (YHIT…IAML), 255 to 275 (NPWV…GIDI), 291 to 311 (IILG…FIAI), 327 to 347 (FYGI…IDGL), and 361 to 381 (LAIL…LKIV).

The protein belongs to the NhaA Na(+)/H(+) (TC 2.A.33) antiporter family.

It is found in the cell inner membrane. The catalysed reaction is Na(+)(in) + 2 H(+)(out) = Na(+)(out) + 2 H(+)(in). Its function is as follows. Na(+)/H(+) antiporter that extrudes sodium in exchange for external protons. The protein is Na(+)/H(+) antiporter NhaA 2 of Campylobacter jejuni subsp. jejuni serotype O:6 (strain 81116 / NCTC 11828).